We begin with the raw amino-acid sequence, 942 residues long: E3 ubiquitin-protein ligase HACE1 (942 aa).

7 ANK repeats span residues 23–55, 64–93, 97–126, 130–159, 163–192, 196–226, and 228–253; these read LPDDNETAVYTLMPMVMADQHRSVSELLSNSKF, VKRSLLHIAANCGSVECLVLLLKKGANPNY, SGCTPLHLAARNGQKKCMSKLLEYSADVNI, EGLTAIHWLAVNGRTELLHDLVQHVSNVDV, MGQTALHVACQNGHKTTVQCLLDSGADINR, SGATPLYFACSHGQRDTAQILLMRGAKYLPD, and NGITPLDLCVQGGYGETCEVLIQYHP. Positions 428–459 are disordered; sequence KGPDHQDATPTPSFAAAGTESRKELSTDTGDS. Basic and acidic residues predominate over residues 447 to 459; that stretch reads ESRKELSTDTGDS. Positions 607–942 constitute an HECT domain; the sequence is NCAKLKQGIA…HCGSYGYTMA (336 aa). Cys-909 acts as the Glycyl thioester intermediate in catalysis.

It localises to the golgi apparatus. Its subcellular location is the golgi stack membrane. The protein localises to the cytoplasm. The protein resides in the endoplasmic reticulum. It carries out the reaction S-ubiquitinyl-[E2 ubiquitin-conjugating enzyme]-L-cysteine + [acceptor protein]-L-lysine = [E2 ubiquitin-conjugating enzyme]-L-cysteine + N(6)-ubiquitinyl-[acceptor protein]-L-lysine.. It participates in protein modification; protein ubiquitination. Its function is as follows. E3 ubiquitin-protein ligase involved in Golgi membrane fusion and regulation of small GTPases. Acts as a regulator of Golgi membrane dynamics during the cell cycle: recruited to Golgi membrane by Rab proteins and regulates postmitotic Golgi membrane fusion. Acts by mediating ubiquitination during mitotic Golgi disassembly, ubiquitination serving as a signal for Golgi reassembly later, after cell division. This is E3 ubiquitin-protein ligase HACE1 (HACE1) from Gallus gallus (Chicken).